The primary structure comprises 367 residues: Heme A synthase (367 aa).

5 consecutive transmembrane segments (helical) span residues 25 to 45 (ALRF…LVGG), 111 to 131 (LIAR…WLTG), 139 to 159 (WPLV…WWMV), 174 to 194 (LATH…IMRG), and 210 to 230 (GFAA…ALVA). His274 lines the heme pocket. The next 3 membrane-spanning stretches (helical) occupy residues 276-296 (IGAY…LRAA), 305-325 (AILL…TLLM), and 327-347 (VPLH…GFAV). His335 serves as a coordination point for heme.

It belongs to the COX15/CtaA family. Type 2 subfamily. Interacts with CtaB. Heme b serves as cofactor.

The protein resides in the cell membrane. The catalysed reaction is Fe(II)-heme o + 2 A + H2O = Fe(II)-heme a + 2 AH2. Its pathway is porphyrin-containing compound metabolism; heme A biosynthesis; heme A from heme O: step 1/1. In terms of biological role, catalyzes the conversion of heme O to heme A by two successive hydroxylations of the methyl group at C8. The first hydroxylation forms heme I, the second hydroxylation results in an unstable dihydroxymethyl group, which spontaneously dehydrates, resulting in the formyl group of heme A. This is Heme A synthase from Rhizobium johnstonii (strain DSM 114642 / LMG 32736 / 3841) (Rhizobium leguminosarum bv. viciae).